The following is a 538-amino-acid chain: Mitochondria-eating protein (538 aa).

Positions 1-273 are interaction with YWHAG/14-3-3 protein gamma; the sequence is MAENLKRLVS…PRSRSCSRSR (273 aa). A Phosphoserine modification is found at Ser-85. Positions 92-137 are disordered; sequence GKPVDSKVPSLQNTFDRERRKDPSPRDRDMQQLDSNLNSTRSQLNQ. Residues 106–122 are compositionally biased toward basic and acidic residues; it reads FDRERRKDPSPRDRDMQ. Coiled coils occupy residues 118–186 and 220–256; these read DRDM…ARHR and QRDTEVTSDYKKQLRNLKEEIAVLSAEKSALQGRSSR. A compositionally biased stretch (polar residues) spans 123–137; sequence QLDSNLNSTRSQLNQ. Phosphoserine is present on residues Ser-156 and Ser-159. Disordered stretches follow at residues 174-227 and 247-292; these read LKTL…EVTS and KSAL…NRSK. 2 stretches are compositionally biased toward basic and acidic residues: residues 181–209 and 216–227; these read EDARHRHTDQRSSENRRSEPRSSEERRCE and RNADQRDTEVTS. Residues 253 to 278 show a composition bias toward low complexity; sequence RSSRSRSPSPAPRSRSCSRSRSASPS. Phosphoserine is present on residues Ser-285, Ser-287, and Ser-509.

Belongs to the MIEAP family. Interacts (via coiled-coil domains) with BNIP3L (via BH3 domain). Interacts (via coiled-coil domains) with BNIP3 (via BH3 domain). Interacts with YWHAG/14-3-3 protein gamma; a protein that also plays a role in MALM.

The protein localises to the cytoplasm. It is found in the cytosol. Its subcellular location is the mitochondrion outer membrane. It localises to the mitochondrion matrix. Key regulator of mitochondrial quality that mediates the repairing or degradation of unhealthy mitochondria in response to mitochondrial damage. Mediator of mitochondrial protein catabolic process (also named MALM) by mediating the degradation of damaged proteins inside mitochondria by promoting the accumulation in the mitochondrial matrix of hydrolases that are characteristic of the lysosomal lumen. Also involved in mitochondrion degradation of damaged mitochondria by promoting the formation of vacuole-like structures (named MIV), which engulf and degrade unhealthy mitochondria by accumulating lysosomes. The physical interaction of SPATA18/MIEAP, BNIP3 and BNIP3L/NIX at the mitochondrial outer membrane regulates the opening of a pore in the mitochondrial double membrane in order to mediate the translocation of lysosomal proteins from the cytoplasm to the mitochondrial matrix. Binds cardiolipin. May form molecular condensates (non-membrane-bounded organelles) within mitochondria that compartmentalize and promote cardiolipin metabolism. The polypeptide is Mitochondria-eating protein (SPATA18) (Macaca fascicularis (Crab-eating macaque)).